A 223-amino-acid chain; its full sequence is MKDLENLQKLLGYEFENTKLLNEALTHKSTKLPYSNERLEFLGDAVMDLIVGEYLFKKFSKTNEGDMSKLRAALVNEKSFANMARHLQIGEFIHLSTAEANNGGREKASLLSDAFEAVMGAVYLEAGLDKVREIAVRLLEICYPKIDFSHLVKDYKTALQEITQASLGTTPIYELVRSFGPDHKKEFEIALLLNDKEISRAIANSKKEAQQMAAKIALEKMKK.

The region spanning 4 to 127 (LENLQKLLGY…VMGAVYLEAG (124 aa)) is the RNase III domain. Residue glutamate 40 participates in Mg(2+) binding. Aspartate 44 is an active-site residue. Mg(2+)-binding residues include aspartate 113 and glutamate 116. Residue glutamate 116 is part of the active site. One can recognise a DRBM domain in the interval 154 to 223 (DYKTALQEIT…AKIALEKMKK (70 aa)).

It belongs to the ribonuclease III family. Homodimer. Requires Mg(2+) as cofactor.

Its subcellular location is the cytoplasm. The catalysed reaction is Endonucleolytic cleavage to 5'-phosphomonoester.. Functionally, digests double-stranded RNA. Involved in the processing of primary rRNA transcript to yield the immediate precursors to the large and small rRNAs (23S and 16S). Processes some mRNAs, and tRNAs when they are encoded in the rRNA operon. Processes pre-crRNA and tracrRNA of type II CRISPR loci if present in the organism. This Campylobacter curvus (strain 525.92) protein is Ribonuclease 3.